The chain runs to 304 residues: Acetyl-coenzyme A carboxylase carboxyl transferase subunit beta (304 aa).

Residues 23-292 (VWTKCDSCGQ…PNPEAPREGV (270 aa)) enclose the CoA carboxyltransferase N-terminal domain. C27, C30, C46, and C49 together coordinate Zn(2+). The C4-type zinc-finger motif lies at 27 to 49 (CDSCGQVLYRAELERNLEVCPKC). The tract at residues 284 to 304 (NPEAPREGVVVPPVPDQEPEA) is disordered. The span at 295 to 304 (PPVPDQEPEA) shows a compositional bias: pro residues.

Belongs to the AccD/PCCB family. Acetyl-CoA carboxylase is a heterohexamer composed of biotin carboxyl carrier protein (AccB), biotin carboxylase (AccC) and two subunits each of ACCase subunit alpha (AccA) and ACCase subunit beta (AccD). It depends on Zn(2+) as a cofactor.

The protein localises to the cytoplasm. The enzyme catalyses N(6)-carboxybiotinyl-L-lysyl-[protein] + acetyl-CoA = N(6)-biotinyl-L-lysyl-[protein] + malonyl-CoA. It functions in the pathway lipid metabolism; malonyl-CoA biosynthesis; malonyl-CoA from acetyl-CoA: step 1/1. Functionally, component of the acetyl coenzyme A carboxylase (ACC) complex. Biotin carboxylase (BC) catalyzes the carboxylation of biotin on its carrier protein (BCCP) and then the CO(2) group is transferred by the transcarboxylase to acetyl-CoA to form malonyl-CoA. This chain is Acetyl-coenzyme A carboxylase carboxyl transferase subunit beta, found in Escherichia coli O139:H28 (strain E24377A / ETEC).